We begin with the raw amino-acid sequence, 235 residues long: Glycerol-3-phosphate acyltransferase (235 aa).

The next 6 helical transmembrane spans lie at 4 to 24 (LIVILAVSYLIGSIPTSIIAG), 56 to 76 (AVTLLDIVKGAVAAISVVVFF), 90 to 110 (VALRLIAGLAAVFGHVFTVFA), 126 to 146 (FGIAPVSTLIVLAVFLLTIFV), 152 to 172 (VASIIAAIAFPLVILVRKYLF), and 191 to 211 (IHDSLDFHLLIFGMIVAFAII).

It belongs to the PlsY family. Probably interacts with PlsX.

The protein localises to the cell inner membrane. The enzyme catalyses an acyl phosphate + sn-glycerol 3-phosphate = a 1-acyl-sn-glycero-3-phosphate + phosphate. It participates in lipid metabolism; phospholipid metabolism. Functionally, catalyzes the transfer of an acyl group from acyl-phosphate (acyl-PO(4)) to glycerol-3-phosphate (G3P) to form lysophosphatidic acid (LPA). This enzyme utilizes acyl-phosphate as fatty acyl donor, but not acyl-CoA or acyl-ACP. The sequence is that of Glycerol-3-phosphate acyltransferase from Prosthecochloris aestuarii (strain DSM 271 / SK 413).